The primary structure comprises 1088 residues: DNA damage-binding protein 1b (1088 aa).

This sequence belongs to the DDB1 family. Interacts with DDA1. Binds to KTN80.2/DWA3. Interacts with HTD1.

The protein resides in the nucleus. It participates in protein modification; protein ubiquitination. In terms of biological role, component of light signal transduction machinery. Involved in repression of photomorphogenesis in darkness. Plays a role in DNA repair by forming with DDB2 the UV-damaged DNA-binding protein complex (UV-DDB). The chain is DNA damage-binding protein 1b from Arabidopsis thaliana (Mouse-ear cress).